The following is a 305-amino-acid chain: Serine/threonine-protein phosphatase PP-X isozyme 2 (305 aa).

Asp-51, His-53, Asp-79, and Asn-111 together coordinate Mn(2+). His-112 acts as the Proton donor in catalysis. The Mn(2+) site is built by His-161 and His-236.

It belongs to the PPP phosphatase family. PP-4 (PP-X) subfamily. Requires Mn(2+) as cofactor. As to expression, ubiquitous, mostly expressed in root mersitems, flowers, and vascular tissues.

The protein resides in the plastid stroma. It catalyses the reaction O-phospho-L-seryl-[protein] + H2O = L-seryl-[protein] + phosphate. The catalysed reaction is O-phospho-L-threonyl-[protein] + H2O = L-threonyl-[protein] + phosphate. In Arabidopsis thaliana (Mouse-ear cress), this protein is Serine/threonine-protein phosphatase PP-X isozyme 2 (PPX2).